The sequence spans 748 residues: Antigen peptide transporter 1 (748 aa).

The Cytoplasmic portion of the chain corresponds to 1–15 (MASSRCPAPRGCRCL). A helical membrane pass occupies residues 16 to 36 (PGASLAWLGTVLLLLADWVLL). Residues 37–53 (RTALPRIFSLLVPTALP) lie on the Lumenal side of the membrane. A helical transmembrane segment spans residues 54 to 76 (LLRVWAVGLSRWAVLWLGACGVL). Topologically, residues 77-92 (RATVGSKSENAGAQGW) are cytoplasmic. A helical transmembrane segment spans residues 93 to 113 (LAALKPLAAALGLALPGLALF). Residues 114–133 (RELISWGAPGSADSTRLLHW) lie on the Lumenal side of the membrane. The helical transmembrane segment at 134–154 (GSHPTAFVVSYAAALPAAALW) threads the bilayer. Residues 155–186 (HKLGSLWVPGGQGGSGNPVRRLLGCLGSETRR) are Cytoplasmic-facing. Residues 187 to 207 (LSLFLVLVVLSSLGEMAIPFF) form a helical membrane-spanning segment. One can recognise an ABC transmembrane type-1 domain in the interval 187–470 (LSLFLVLVVL…LLSIYPRVQK (284 aa)). At 208 to 227 (TGRLTDWILQDGSADTFTRN) the chain is on the lumenal side. Residues 228–248 (LTLMSILTIASAVLEFVGDGI) traverse the membrane as a helical segment. Over 249–298 (YNNTMGHVHSHLQGEVFGAVLRQETEFFQQNQTGNIMSRVTEDTSTLSDS) the chain is Cytoplasmic. Residues 299 to 319 (LSENLSLFLWYLVRGLCLLGI) form a helical membrane-spanning segment. The Lumenal portion of the chain corresponds to 320 to 328 (MLWGSVSLT). A helical membrane pass occupies residues 329–349 (MVTLITLPLLFLLPKKVGKWY). Residues 350 to 418 (QLLEVQVRES…AVNSWTTSIS (69 aa)) are Cytoplasmic-facing. The segment at 375–420 (PTVRSFANEEGEAQKFREKLQEIKTLNQKEAVAYAVNSWTTSISGM) is part of the peptide-binding site. Residues 419–439 (GMLLKVGILYIGGQLVTSGAV) form a helical membrane-spanning segment. Residues 440-443 (SSGN) are Lumenal-facing. The chain crosses the membrane as a helical span at residues 444-464 (LVTFVLYQMQFTQAVEVLLSI). Residues 453–487 (QFTQAVEVLLSIYPRVQKAVGSSEKIFEYLDRTPR) are part of the peptide-binding site. Residues 465–748 (YPRVQKAVGS…MVQAPADAPE (284 aa)) lie on the Cytoplasmic side of the membrane. In terms of domain architecture, ABC transporter spans 503 to 742 (VQFQDVSFAY…KGCYWAMVQA (240 aa)). Residues 538 to 546 (GPNGSGKST), 641 to 647 (SQLSGGQ), and glutamine 701 each bind ATP. Position 545 (serine 545) interacts with Mg(2+).

Belongs to the ABC transporter superfamily. ABCB family. MHC peptide exporter (TC 3.A.1.209) subfamily. As to quaternary structure, heterodimer of TAP1 and TAP2 (TAP1-TAP2). A component of the peptide loading complex (PLC), interacts via TAPBP with MHCI heterodimer; this interaction mediates peptide-MHCI assembly. Recruits TAPBP in a 1:1 stoichiometry. Interacts with classical MHCI such as HLA-A*02-B2M; this interaction is obligatory for the loading of peptide epitopes. Interacts with non-classical MHCI molecules including HLA-E-B2M and HLA-F-B2M as well as PLC component CALR before the peptide loading. Interacts with PSMB5 and PSMB8. In terms of assembly, (Microbial infection) Interacts with Epstein-Barr virus BNLF2a. (Microbial infection) Interacts with herpes simplex virus US12/ICP47. As to quaternary structure, (Microbial infection) Interacts with adenovirus E3-19K glycoprotein, which binds TAP1-TAP2 and acts as a TAPBP inhibitor, preventing TAP1-TAP2 association with MHCI. Mg(2+) is required as a cofactor. In terms of tissue distribution, highly expressed in professional APCs monocytes and dendritic cells as well as in lymphocyte subsets T cells, B cells and NK cells.

The protein localises to the endoplasmic reticulum membrane. The enzyme catalyses a peptide antigen(in) + ATP + H2O = a peptide antigen(out) + ADP + phosphate + H(+). With respect to regulation, inhibited at high ER lumenal peptide concentrations. (Microbial infection) Inhibited by herpes simplex virus US12/ICP47 protein, which blocks the peptide-binding site of TAP1-TAP2. Its activity is regulated as follows. (Microbial infection) Inhibited by human cytomegalovirus US6 glycoprotein, which binds to the lumenal side of TAP1-TAP2 complex and inhibits peptide translocation by specifically blocking ATP-binding and preventing TAP1-TAP2 conformational rearrangement induced by peptide binding. ABC transporter associated with antigen processing. In complex with TAP2 mediates unidirectional translocation of peptide antigens from cytosol to endoplasmic reticulum (ER) for loading onto MHC class I (MHCI) molecules. Uses the chemical energy of ATP to export peptides against the concentration gradient. During the transport cycle alternates between 'inward-facing' state with peptide binding site facing the cytosol to 'outward-facing' state with peptide binding site facing the ER lumen. Peptide antigen binding to ATP-loaded TAP1-TAP2 induces a switch to hydrolysis-competent 'outward-facing' conformation ready for peptide loading onto nascent MHCI molecules. Subsequently ATP hydrolysis resets the transporter to the 'inward facing' state for a new cycle. Typically transports intracellular peptide antigens of 8 to 13 amino acids that arise from cytosolic proteolysis via IFNG-induced immunoproteasome. Binds peptides with free N- and C-termini, the first three and the C-terminal residues being critical. Preferentially selects peptides having a highly hydrophobic residue at position 3 and hydrophobic or charged residues at the C-terminal anchor. Proline at position 2 has the most destabilizing effect. As a component of the peptide loading complex (PLC), acts as a molecular scaffold essential for peptide-MHCI assembly and antigen presentation. In Homo sapiens (Human), this protein is Antigen peptide transporter 1.